A 337-amino-acid polypeptide reads, in one-letter code: uncharacterized protein (337 aa).

Residues 5–235 form the ABC transporter domain; that stretch reads VEFDNVSRLY…PRTPFVAGFV (231 aa). Residue 37 to 44 coordinates ATP; sequence GPSGSGKT.

It belongs to the ABC transporter superfamily.

In terms of biological role, probably part of the ABC transporter complex YdcSTUV. Probably responsible for energy coupling to the transport system. This is an uncharacterized protein from Escherichia coli (strain K12).